The sequence spans 266 residues: Transcription factor atoh8 (266 aa).

Residues 140–164 (AASQAPAGGSERAESPRKRAGEPSG) are disordered. Positions 150–160 (ERAESPRKRAG) are enriched in basic and acidic residues. A basic motif; degenerate region spans residues 175–188 (TRRLLANARERTRV). The 53-residue stretch at 175 to 227 (TRRLLANARERTRVHTISAAFEALRKQVPCYSYGQKLSKLAILRIACNYILSL) folds into the bHLH domain. The segment at 189–227 (HTISAAFEALRKQVPCYSYGQKLSKLAILRIACNYILSL) is helix-loop-helix motif.

The protein resides in the nucleus. The protein localises to the nucleus speckle. It is found in the cytoplasm. Functionally, transcription factor that binds a palindromic (canonical) core consensus DNA sequence 5'-CANNTG- 3' known as an E-box element, possibly as a heterodimer with other bHLH proteins. During development, is required for heart looping and swim bladder formation by acting in concert with GATA4 and ZFPM1. During the development of both the retina and skeletal muscles is required for neural retinal cell through modulating PAX6 and NEUROG3 expression and myogenic differentiation. The polypeptide is Transcription factor atoh8 (Danio rerio (Zebrafish)).